The chain runs to 847 residues: Aryl hydrocarbon receptor (847 aa).

A disordered region spans residues 1–39; sequence MNGGGANITYASRKRRKPVQKTVKPIPAEGIKSNPSKRH. 2 short sequence motifs (nuclear localization signal) span residues 13-16 and 37-42; these read RKRR and KRHRDR. Residues 27–80 form the bHLH domain; the sequence is PAEGIKSNPSKRHRDRLNTELDRLASLLPFPQDVINKLDKLSVLRLSVSYLRAK. The tract at residues 38 to 66 is DNA-binding; sequence RHRDRLNTELDRLASLLPFPQDVINKLDK. 3 required for maintaining the overall integrity of the AHR:ARNT heterodimer and its transcriptional activity regions span residues 50 to 82, 117 to 125, and 264 to 266; these read LASL…AKSF, LLQALNGFV, and FAI. Residues 64 to 72 carry the Nuclear export signal motif; the sequence is LDKLSVLRL. In terms of domain architecture, PAS 1 spans 120-173; that stretch reads ALNGFVLVVTVDALVFYASSTIQDYLGFQQSDVIHQSVYELIHTEDRAEFQRQL. In terms of domain architecture, PAS 2 spans 281–336; that stretch reads KNFIFRTKHKLDFTPTGCDAKGQIVLGYTEAELCMRGSGYQFIHAADMLYCAESHI. Residues 346-384 form the PAC domain; the sequence is LAVFRLLTKDNRWAWVQSNARFIYKNGRPDFIIATQRPL. Disordered regions lie at residues 430 to 452 and 825 to 847; these read KSGT…VHPS and HLPP…GRLL. The span at 440-452 shows a compositional bias: polar residues; it reads TKPTPSKDSVHPS.

In terms of assembly, homodimer. Heterodimer; efficient DNA binding requires dimerization with another bHLH protein. Binds MYBBP1A. Interacts with coactivators including SRC-1, RIP140 and NOCA7, and with the corepressor SMRT. Interacts with NEDD8 and IVNS1ABP. Interacts with BMAL1. Interacts with HSP90AB1. Interacts with ARNT; the heterodimer ARNT:AHR binds to core DNA sequence 5'-TGCGTG-3' within the dioxin response element (DRE) of target gene promoters and activates their transcription. Interacts with TIPARP; leading to mono-ADP-ribosylation of AHR and subsequent inhibition of AHR. In terms of processing, mono-ADP-ribosylated, leading to inhibit transcription activator activity of AHR.

The protein resides in the cytoplasm. Its subcellular location is the nucleus. Ligand-activated transcription factor that enables cells to adapt to changing conditions by sensing compounds from the environment, diet, microbiome and cellular metabolism, and which plays important roles in development, immunity and cancer. Upon ligand binding, translocates into the nucleus, where it heterodimerizes with ARNT and induces transcription by binding to xenobiotic response elements (XRE). Regulates a variety of biological processes, including angiogenesis, hematopoiesis, drug and lipid metabolism, cell motility and immune modulation. Xenobiotics can act as ligands: upon xenobiotic-binding, activates the expression of multiple phase I and II xenobiotic chemical metabolizing enzyme genes (such as the CYP1A1 gene). Mediates biochemical and toxic effects of halogenated aromatic hydrocarbons. Next to xenobiotics, natural ligands derived from plants, microbiota, and endogenous metabolism are potent AHR agonists. Tryptophan (Trp) derivatives constitute an important class of endogenous AHR ligands. Acts as a negative regulator of anti-tumor immunity: indoles and kynurenic acid generated by Trp catabolism act as ligand and activate AHR, thereby promoting AHR-driven cancer cell motility and suppressing adaptive immunity. Regulates the circadian clock by inhibiting the basal and circadian expression of the core circadian component PER1. Inhibits PER1 by repressing the CLOCK-BMAL1 heterodimer mediated transcriptional activation of PER1. The heterodimer ARNT:AHR binds to core DNA sequence 5'-TGCGTG-3' within the dioxin response element (DRE) of target gene promoters and activates their transcription. This chain is Aryl hydrocarbon receptor (AHR), found in Oryctolagus cuniculus (Rabbit).